Reading from the N-terminus, the 92-residue chain is MRFFQVGLLCLALFVQYRLWFGHNGVQDYTRLKSAVASHLQTNEKLIKRNKVLTADIEDLKLGHEGIEERARNELGMIKAGETFIRVLPAQQ.

The Cytoplasmic portion of the chain corresponds to 1–3; that stretch reads MRF. Residues 4-21 traverse the membrane as a helical segment; the sequence is FQVGLLCLALFVQYRLWF. Residues 22–92 lie on the Periplasmic side of the membrane; sequence GHNGVQDYTR…TFIRVLPAQQ (71 aa). Positions 40 to 73 form a coiled coil; the sequence is LQTNEKLIKRNKVLTADIEDLKLGHEGIEERARN.

Belongs to the FtsB family. Part of a complex composed of FtsB, FtsL and FtsQ.

Its subcellular location is the cell inner membrane. Essential cell division protein. May link together the upstream cell division proteins, which are predominantly cytoplasmic, with the downstream cell division proteins, which are predominantly periplasmic. The protein is Cell division protein FtsB of Pseudoalteromonas translucida (strain TAC 125).